Consider the following 104-residue polypeptide: MSWIILFVAGLLEIVWAVGLKYTHGFTRLTPSIITISAMIVSMGMLSYAMKGLPAGTAYAIWTGIGAVGTAIFGIIVFGESANIYRLLSLAMIVFGIIGLKLAS.

The Cytoplasmic portion of the chain corresponds to 1–3; it reads MSW. The helical transmembrane segment at 4–26 threads the bilayer; the sequence is IILFVAGLLEIVWAVGLKYTHGF. Over 27-32 the chain is Periplasmic; that stretch reads TRLTPS. Residues 33 to 50 form a helical membrane-spanning segment; sequence IITISAMIVSMGMLSYAM. Over 51-54 the chain is Cytoplasmic; the sequence is KGLP. Residues 55 to 77 form a helical membrane-spanning segment; it reads AGTAYAIWTGIGAVGTAIFGIIV. The Periplasmic segment spans residues 78–83; sequence FGESAN. Residues 84–103 traverse the membrane as a helical segment; the sequence is IYRLLSLAMIVFGIIGLKLA. Position 104 (serine 104) is a topological domain, cytoplasmic.

This sequence belongs to the drug/metabolite transporter (DMT) superfamily. Small multidrug resistance (SMR) (TC 2.A.7.1) family. Gdx/SugE subfamily.

Its subcellular location is the cell inner membrane. Guanidinium ion exporter. Couples guanidinium export to the proton motive force, exchanging one guanidinium ion for two protons. The polypeptide is Guanidinium exporter (Proteus vulgaris).